We begin with the raw amino-acid sequence, 222 residues long: Putative thymidylate synthase (222 aa).

The active site involves cysteine 146.

The protein belongs to the thymidylate synthase family. Archaeal-type ThyA subfamily. In terms of assembly, monomer.

The protein resides in the cytoplasm. It participates in pyrimidine metabolism; dTTP biosynthesis. In terms of biological role, may catalyze the biosynthesis of dTMP using an unknown cosubstrate. In Methanothermobacter thermautotrophicus (strain ATCC 29096 / DSM 1053 / JCM 10044 / NBRC 100330 / Delta H) (Methanobacterium thermoautotrophicum), this protein is Putative thymidylate synthase.